A 149-amino-acid chain; its full sequence is Histidine-containing phosphotransfer protein 2 (149 aa).

Positions 39–144 (TPGFVSEVVT…LQLEQQIQAY (106 aa)) constitute an HPt domain. Histidine 80 bears the Phosphohistidine mark.

Post-translationally, two-component system major event consists of a His-to-Asp phosphorelay between a sensor histidine kinase (HK) and a response regulator (RR). In plants, the His-to-Asp phosphorelay involves an additional intermediate named Histidine-containing phosphotransfer protein (HPt). This multistep phosphorelay consists of a His-Asp-His-Asp sequential transfer of a phosphate group between first a His and an Asp of the HK protein, followed by the transfer to a conserved His of the HPt protein and finally the transfer to an Asp in the receiver domain of the RR protein. As to expression, widely expressed.

The protein localises to the cytoplasm. It localises to the cytosol. It is found in the nucleus. Functionally, functions as a two-component phosphorelay mediators between cytokinin sensor histidine kinases and response regulators (B-type ARRs). Plays an important role in propagating cytokinin signal transduction through the multistep His-to-Asp phosphorelay. Functions as a positive regulator of the cytokinin signaling pathway. May play a regulatory role in salt and drought tolerance during plant development. In Oryza sativa subsp. japonica (Rice), this protein is Histidine-containing phosphotransfer protein 2.